Here is a 373-residue protein sequence, read N- to C-terminus: Thyroid hormone receptor beta (373 aa).

Residues 1 to 18 (MPSSMSGYIPSYLDKDEL) form a modulating region. Residues Cys-19, Cys-22, Cys-36, Cys-39, Cys-57, Cys-63, Cys-73, and Cys-76 each contribute to the Zn(2+) site. 2 NR C4-type zinc fingers span residues 19 to 39 (CVVC…CEGC) and 57 to 81 (CKYE…FKKC). A DNA-binding region (nuclear receptor) is located at residues 19–93 (CVVCGDKATG…VGMATDLVLD (75 aa)). An NR LBD domain is found at 129 to 373 (EEWELIQVVT…PPLFLEVFED (245 aa)). Arg-194, Asn-243, and His-347 together coordinate 3,3',5-triiodo-L-thyronine. L-thyroxine is bound by residues Arg-194, Asn-243, and His-347.

The protein belongs to the nuclear hormone receptor family. NR1 subfamily.

The protein localises to the nucleus. Functionally, nuclear hormone receptor that can act as a repressor or activator of transcription. High affinity receptor for thyroid hormones, including triiodothyronine and thyroxine. The chain is Thyroid hormone receptor beta (thrb) from Aquarana catesbeiana (American bullfrog).